Here is a 782-residue protein sequence, read N- to C-terminus: uncharacterized protein (782 aa).

3 disordered regions span residues 1–127 (MTTT…SAMK), 205–234 (NAAA…SYNP), and 308–355 (PYNF…SYLR). The span at 24–54 (KPQEEPTMKDKALLFEKQRQEKKMKHTEAKM) shows a compositional bias: basic and acidic residues. The span at 82–118 (KNVNNATSTNNATSTKNNTKNTPKNTPKNIPKNTTAK) shows a compositional bias: low complexity. Polar residues predominate over residues 312–324 (ARNNHGSDVSSAM). Residues 326 to 336 (NARRQASETRR) are compositionally biased toward basic and acidic residues. The segment covering 337–346 (SNLSSYNDRN) has biased composition (polar residues). Residues 361–628 (MEKIRTEVDK…ERLRERLREL (268 aa)) adopt a coiled-coil conformation. Basic and acidic residues predominate over residues 629–668 (GSRDRSYNRSSRDRSHDRLYERSPRSRDRSSRDRSRDRYS). The segment at 629-689 (GSRDRSYNRS…SDSVKDYSVG (61 aa)) is disordered. A compositionally biased stretch (basic residues) spans 669-678 (RSRSRSRYRR). Over residues 679 to 689 (RSDSVKDYSVG) the composition is skewed to basic and acidic residues.

This is an uncharacterized protein from Yarrowia lipolytica (strain CLIB 122 / E 150) (Yeast).